A 108-amino-acid polypeptide reads, in one-letter code: MAATALAVRSRIGAWSVWAMQSRGFSSDTPEGVRSGAGAVRDAGGAFGKKEQADEERYFRARAREQLAALKKHHENEISHHVKEIERLQKEIERHKQSIKKLKNDDDD.

A mitochondrion-targeting transit peptide spans 1-25 (MAATALAVRSRIGAWSVWAMQSRGF). The segment at 25–48 (FSSDTPEGVRSGAGAVRDAGGAFG) is disordered. Residues 26–52 (SSDTPEGVRSGAGAVRDAGGAFGKKEQ) form an N-terminal inhibitory region region. Residues 69–108 (ALKKHHENEISHHVKEIERLQKEIERHKQSIKKLKNDDDD) adopt a coiled-coil conformation. Positions 74 to 106 (HENEISHHVKEIERLQKEIERHKQSIKKLKNDD) are antiparallel alpha-helical coiled coil region. K103 is subject to N6-succinyllysine.

Belongs to the ATPase inhibitor family. Homodimer; represents the active form and is present at a pH value below 6.5. Homotetramer; represents the inactive form and is present at a pH value above 7.0.

The protein localises to the mitochondrion. Functionally, endogenous F(1)F(o)-ATPase inhibitor limiting ATP depletion when the mitochondrial membrane potential falls below a threshold and the F(1)F(o)-ATP synthase starts hydrolyzing ATP to pump protons out of the mitochondrial matrix. Required to avoid the consumption of cellular ATP when the F(1)F(o)-ATP synthase enzyme acts as an ATP hydrolase. Indirectly acts as a regulator of heme synthesis in erythroid tissues: regulates heme synthesis by modulating the mitochondrial pH and redox potential, allowing FECH to efficiently catalyze the incorporation of iron into protoporphyrin IX to produce heme. This chain is ATPase inhibitor, mitochondrial, found in Sus scrofa (Pig).